The following is a 373-amino-acid chain: SWI/SNF-related matrix-associated actin-dependent regulator of chromatin subfamily B member 1-A (373 aa).

A DNA-binding region spans residues 1–101 (MALSKTYGQK…DEKYKAVSIS (101 aa)).

Belongs to the SNF5 family. In terms of assembly, component of the multiprotein chromatin-remodeling complexes SWI/SNF. Component of neural progenitors-specific chromatin remodeling complex (npBAF complex) and the neuron-specific chromatin remodeling complex (nBAF complex). Component of the BAF (SWI/SNF) chromatin remodeling complex. Component of the SWI/SNF-B (PBAF) chromatin remodeling complex. Binds to double-stranded DNA.

It localises to the nucleus. In terms of biological role, involved in chromatin-remodeling. Core component of the BAF (SWI/SNF) complex. This ATP-dependent chromatin-remodeling complex plays important roles in cell proliferation and differentiation, in cellular antiviral activities and inhibition of tumor formation. Belongs to the neural progenitors-specific chromatin remodeling complex (npBAF complex) and the neuron-specific chromatin remodeling complex (nBAF complex) and may play a role in neural development. The polypeptide is SWI/SNF-related matrix-associated actin-dependent regulator of chromatin subfamily B member 1-A (smarcb1a) (Danio rerio (Zebrafish)).